The primary structure comprises 187 residues: Elongation factor P (187 aa).

This sequence belongs to the elongation factor P family.

The protein resides in the cytoplasm. It participates in protein biosynthesis; polypeptide chain elongation. Functionally, involved in peptide bond synthesis. Stimulates efficient translation and peptide-bond synthesis on native or reconstituted 70S ribosomes in vitro. Probably functions indirectly by altering the affinity of the ribosome for aminoacyl-tRNA, thus increasing their reactivity as acceptors for peptidyl transferase. In Mycobacterium sp. (strain JLS), this protein is Elongation factor P.